A 501-amino-acid chain; its full sequence is Protein translocase subunit SecD (501 aa).

A run of 6 helical transmembrane segments spans residues 9-29 (NLWLHLLGLVILTLLSAYAVV), 339-359 (AIEQGIKAGILAIILLAVVLI), 371-391 (ISIFLNVLFLLASMAFLGATL), 394-414 (PGIAGIILNMGIAVDSNVLIF), 447-467 (VTLLVASVILFQFGSGPVKGF), and 470-490 (TLALGTIASFISNVYYAKVFL).

Belongs to the SecD/SecF family. SecD subfamily. As to quaternary structure, forms a complex with SecF. Part of the essential Sec protein translocation apparatus which comprises SecA, SecYEG and auxiliary proteins SecDF. Other proteins may also be involved.

The protein resides in the cell inner membrane. Part of the Sec protein translocase complex. Interacts with the SecYEG preprotein conducting channel. SecDF uses the proton motive force (PMF) to complete protein translocation after the ATP-dependent function of SecA. The protein is Protein translocase subunit SecD of Aquifex aeolicus (strain VF5).